The sequence spans 456 residues: Bifunctional protein GlmU (456 aa).

A pyrophosphorylase region spans residues 1-228; sequence MKLKAIILAA…YEDIMAVNSR (228 aa). UDP-N-acetyl-alpha-D-glucosamine contacts are provided by residues 8–11, K22, Q72, 77–78, 99–101, G138, E153, N168, and N226; these read LAAG, GT, and YGD. D101 contributes to the Mg(2+) binding site. N226 provides a ligand contact to Mg(2+). The segment at 229 to 249 is linker; it reads EQLAEVEEVMQRRIVKKHMEA. The N-acetyltransferase stretch occupies residues 250 to 456; that stretch reads GVTFIDPQST…WVARKGVGKK (207 aa). UDP-N-acetyl-alpha-D-glucosamine contacts are provided by R331 and K349. H361 acts as the Proton acceptor in catalysis. UDP-N-acetyl-alpha-D-glucosamine is bound by residues Y364 and N375. Acetyl-CoA is bound by residues 384–385, S403, S421, and R438; that span reads NY.

This sequence in the N-terminal section; belongs to the N-acetylglucosamine-1-phosphate uridyltransferase family. In the C-terminal section; belongs to the transferase hexapeptide repeat family. In terms of assembly, homotrimer. Mg(2+) serves as cofactor.

It localises to the cytoplasm. It catalyses the reaction alpha-D-glucosamine 1-phosphate + acetyl-CoA = N-acetyl-alpha-D-glucosamine 1-phosphate + CoA + H(+). It carries out the reaction N-acetyl-alpha-D-glucosamine 1-phosphate + UTP + H(+) = UDP-N-acetyl-alpha-D-glucosamine + diphosphate. The protein operates within nucleotide-sugar biosynthesis; UDP-N-acetyl-alpha-D-glucosamine biosynthesis; N-acetyl-alpha-D-glucosamine 1-phosphate from alpha-D-glucosamine 6-phosphate (route II): step 2/2. Its pathway is nucleotide-sugar biosynthesis; UDP-N-acetyl-alpha-D-glucosamine biosynthesis; UDP-N-acetyl-alpha-D-glucosamine from N-acetyl-alpha-D-glucosamine 1-phosphate: step 1/1. It functions in the pathway bacterial outer membrane biogenesis; LPS lipid A biosynthesis. In terms of biological role, catalyzes the last two sequential reactions in the de novo biosynthetic pathway for UDP-N-acetylglucosamine (UDP-GlcNAc). The C-terminal domain catalyzes the transfer of acetyl group from acetyl coenzyme A to glucosamine-1-phosphate (GlcN-1-P) to produce N-acetylglucosamine-1-phosphate (GlcNAc-1-P), which is converted into UDP-GlcNAc by the transfer of uridine 5-monophosphate (from uridine 5-triphosphate), a reaction catalyzed by the N-terminal domain. The sequence is that of Bifunctional protein GlmU from Alkaliphilus metalliredigens (strain QYMF).